The primary structure comprises 460 residues: Tyrosine phenol-lyase (460 aa).

Lys260 is subject to N6-(pyridoxal phosphate)lysine.

This sequence belongs to the beta-eliminating lyase family. As to quaternary structure, homotetramer. The cofactor is pyridoxal 5'-phosphate.

It catalyses the reaction L-tyrosine + H2O = phenol + pyruvate + NH4(+). The polypeptide is Tyrosine phenol-lyase (Clostridium tetani (strain Massachusetts / E88)).